The chain runs to 268 residues: uncharacterized protein (268 aa).

A coiled-coil region spans residues aspartate 132–glutamate 159.

This is an uncharacterized protein from Methanocaldococcus jannaschii (strain ATCC 43067 / DSM 2661 / JAL-1 / JCM 10045 / NBRC 100440) (Methanococcus jannaschii).